The chain runs to 239 residues: Exosome complex component Rrp4 (239 aa).

The 73-residue stretch at 67-139 folds into the S1 motif domain; sequence GDFVVGIVEE…PVQRVELSLL (73 aa). The KH domain occupies 151–217; sequence QGGQVVEIDP…LAVRAIREIE (67 aa).

This sequence belongs to the RRP4 family. As to quaternary structure, component of the archaeal exosome complex. Forms a trimer of Rrp4 and/or Csl4 subunits. The trimer associates with a hexameric ring-like arrangement composed of 3 Rrp41-Rrp42 heterodimers.

It localises to the cytoplasm. In terms of biological role, non-catalytic component of the exosome, which is a complex involved in RNA degradation. Increases the RNA binding and the efficiency of RNA degradation. Confers strong poly(A) specificity to the exosome. The chain is Exosome complex component Rrp4 from Methanopyrus kandleri (strain AV19 / DSM 6324 / JCM 9639 / NBRC 100938).